The primary structure comprises 343 residues: Sodium/bile acid cotransporter 7 (343 aa).

At 1-10 (MGLLERLRKE) the chain is on the cytoplasmic side. Residues 11–31 (WFIVGIILVIAAAKLEPTIGG) traverse the membrane as a helical segment. At 32-37 (KGGPLK) the chain is on the extracellular side. Residues 38–58 (PEITITYIAVSAIFFNSGLSL) traverse the membrane as a helical segment. The Cytoplasmic segment spans residues 59-71 (KTEELTNALMHVK). Residues 72 to 92 (LHLFVQLFTLVFFPTAIWVFL) traverse the membrane as a helical segment. Residues 93–116 (QVLSLTPINEWLLKGLQTVSCMPP) lie on the Extracellular side of the membrane. A helical transmembrane segment spans residues 117–137 (PVSSAVILTKAVGGNEAAAIF). Asparagine 138 is a topological domain (cytoplasmic). A helical transmembrane segment spans residues 139–159 (SAFGSFLGIVVTPLLLLLFLG). Residues 160–163 (SSSS) are Extracellular-facing. The helical transmembrane segment at 164-184 (VPFTSIFSQLFMTVVVPLIIG) threads the bilayer. Over 185–201 (QIVRRYIKDWLERKKPP) the chain is Cytoplasmic. Residues 202-222 (FGAISSCVLLMIIYTTFCDTF) traverse the membrane as a helical segment. The Extracellular portion of the chain corresponds to 223–234 (SNPNIDLDTFSL). The helical transmembrane segment at 235-255 (VIIVFIIFFIQLAFMLLTFLF) threads the bilayer. Residues 256–270 (STSKNTGFTPADTVA) are Cytoplasmic-facing. Residues 271–291 (IVFCSTHKSLTLGIPMLKIVF) traverse the membrane as a helical segment. The Extracellular portion of the chain corresponds to 292-298 (AGYEHLS). A helical transmembrane segment spans residues 299 to 319 (LISVPLLIYHPAQILLGSVLV). Residues 320 to 343 (PTIKSWMLSRQKALKLTRQPKVPL) are Cytoplasmic-facing.

It belongs to the bile acid:sodium symporter (BASS) (TC 2.A.28) family.

The protein resides in the cell membrane. Its subcellular location is the endoplasmic reticulum membrane. It is found in the golgi apparatus membrane. Its function is as follows. Involved in teeth and skeletal development. Has an essential role in the biosynthesis and trafficking of glycosaminoglycans and glycoproteins to produce a proper functioning extracellular matrix. Required for extracellular matrix mineralization. Also involved in the regulation of cellular calcium homeostasis. Does not show transport activity towards bile acids or steroid sulfates. The chain is Sodium/bile acid cotransporter 7 (slc10a7) from Xenopus tropicalis (Western clawed frog).